The chain runs to 355 residues: Chemerin-like receptor 2 (355 aa).

Topologically, residues 1–41 (MEDLEETLFEEFENYSYDLDYYSLESDLEEKVQLGVVHWVS) are extracellular. Asn14 carries N-linked (GlcNAc...) asparagine glycosylation. A helical transmembrane segment spans residues 42–62 (LVLYCLAFVLGIPGNAIVIWF). Over 63 to 73 (TGFKWKKTVTT) the chain is Cytoplasmic. Residues 74-94 (LWFLNLAIADFIFLLFLPLYI) form a helical membrane-spanning segment. Residues 95–112 (SYVAMNFHWPFGIWLCKA) lie on the Extracellular side of the membrane. Cys110 and Cys187 are oxidised to a cystine. Residues 113 to 133 (NSFTAQLNMFASVFFLTVISL) form a helical membrane-spanning segment. Over 134–154 (DHYIHLIHPVLSHRHRTLKNS) the chain is Cytoplasmic. A helical transmembrane segment spans residues 155 to 175 (LIVIIFIWLLASLIGGPALYF). The Extracellular portion of the chain corresponds to 176–210 (RDTVEFNNHTLCYNNFQKHDPDLTLIRHHVLTWVK). A helical membrane pass occupies residues 211 to 231 (FIIGYLFPLLTMSICYLCLIF). At 232–247 (KVKKRSILISSRHFWT) the chain is on the cytoplasmic side. A helical membrane pass occupies residues 248 to 268 (ILVVVVAFVVCWTPYHLFSIW). Topologically, residues 269-286 (ELTIHHNSYSHHVMQAGI) are extracellular. Residues 287–307 (PLSTGLAFLNSCLNPILYVLI) form a helical membrane-spanning segment. Residues 308-355 (SKKFQARFRSSVAEILKYTLWEVSCSGTVSEQLRNSETKNLCLLETAQ) are Cytoplasmic-facing.

Belongs to the chemokine-like receptor (CMKLR) family. As to expression, expressed in hippocampus.

Its subcellular location is the cell membrane. Receptor for chemoattractant adipokine chemerin/RARRES2 suggesting a role for this receptor in the regulation of inflammation and energy homesotasis. Signals mainly via beta-arrestin pathway. Binding of RARRES2 activates weakly G proteins, calcium mobilization and MAPK1/MAPK3 (ERK1/2) phosphorylation too. Also acts as a receptor for TAFA1, mediates its effects on neuronal stem-cell proliferation and differentiation via the activation of ROCK/ERK and ROCK/STAT3 signaling pathway. In terms of biological role, (Microbial infection) Coreceptor for HIV-1. The chain is Chemerin-like receptor 2 from Homo sapiens (Human).